The chain runs to 336 residues: Holliday junction branch migration complex subunit RuvB (336 aa).

Residues 1-183 (MTEEHLTSQE…FGIVEHMQYY (183 aa)) are large ATPase domain (RuvB-L). ATP contacts are provided by residues leucine 22, arginine 23, glycine 64, lysine 67, threonine 68, threonine 69, 130 to 132 (EDF), arginine 173, tyrosine 183, and arginine 220. Residue threonine 68 participates in Mg(2+) binding. Residues 184-254 (QVEDLEKIIL…TTAMALKQLQ (71 aa)) are small ATPAse domain (RuvB-S). The tract at residues 257–336 (SAGLDQTDRK…LNLPLPGEEE (80 aa)) is head domain (RuvB-H). DNA is bound by residues arginine 293 and arginine 317.

This sequence belongs to the RuvB family. As to quaternary structure, homohexamer. Forms an RuvA(8)-RuvB(12)-Holliday junction (HJ) complex. HJ DNA is sandwiched between 2 RuvA tetramers; dsDNA enters through RuvA and exits via RuvB. An RuvB hexamer assembles on each DNA strand where it exits the tetramer. Each RuvB hexamer is contacted by two RuvA subunits (via domain III) on 2 adjacent RuvB subunits; this complex drives branch migration. In the full resolvosome a probable DNA-RuvA(4)-RuvB(12)-RuvC(2) complex forms which resolves the HJ.

It is found in the cytoplasm. It catalyses the reaction ATP + H2O = ADP + phosphate + H(+). Its function is as follows. The RuvA-RuvB-RuvC complex processes Holliday junction (HJ) DNA during genetic recombination and DNA repair, while the RuvA-RuvB complex plays an important role in the rescue of blocked DNA replication forks via replication fork reversal (RFR). RuvA specifically binds to HJ cruciform DNA, conferring on it an open structure. The RuvB hexamer acts as an ATP-dependent pump, pulling dsDNA into and through the RuvAB complex. RuvB forms 2 homohexamers on either side of HJ DNA bound by 1 or 2 RuvA tetramers; 4 subunits per hexamer contact DNA at a time. Coordinated motions by a converter formed by DNA-disengaged RuvB subunits stimulates ATP hydrolysis and nucleotide exchange. Immobilization of the converter enables RuvB to convert the ATP-contained energy into a lever motion, pulling 2 nucleotides of DNA out of the RuvA tetramer per ATP hydrolyzed, thus driving DNA branch migration. The RuvB motors rotate together with the DNA substrate, which together with the progressing nucleotide cycle form the mechanistic basis for DNA recombination by continuous HJ branch migration. Branch migration allows RuvC to scan DNA until it finds its consensus sequence, where it cleaves and resolves cruciform DNA. The chain is Holliday junction branch migration complex subunit RuvB from Lactobacillus delbrueckii subsp. bulgaricus (strain ATCC 11842 / DSM 20081 / BCRC 10696 / JCM 1002 / NBRC 13953 / NCIMB 11778 / NCTC 12712 / WDCM 00102 / Lb 14).